The sequence spans 609 residues: Glutamine--fructose-6-phosphate aminotransferase [isomerizing] (609 aa).

Residue C2 is the Nucleophile; for GATase activity of the active site. In terms of domain architecture, Glutamine amidotransferase type-2 spans 2–218 (CGIVGAIAQR…EGDIAEITRR (217 aa)). SIS domains are found at residues 286 to 426 (ADEL…LKGL) and 458 to 599 (LAED…VDQP). K604 (for Fru-6P isomerization activity) is an active-site residue.

Homodimer.

It is found in the cytoplasm. It carries out the reaction D-fructose 6-phosphate + L-glutamine = D-glucosamine 6-phosphate + L-glutamate. Its function is as follows. Catalyzes the first step in hexosamine metabolism, converting fructose-6P into glucosamine-6P using glutamine as a nitrogen source. The chain is Glutamine--fructose-6-phosphate aminotransferase [isomerizing] from Shigella flexneri.